We begin with the raw amino-acid sequence, 346 residues long: 2,5-dichlorohydroquinone reductive dechlorinase (346 aa).

The GST N-terminal domain maps to 43 to 154; the sequence is PRFELFHFVF…YLCDALSGGT (112 aa). Residues 189–335 enclose the GST C-terminal domain; the sequence is DRRPESMQAV…AIIQWPGHPP (147 aa).

This sequence belongs to the GST superfamily.

The enzyme catalyses 2,5-dichlorohydroquinone + 2 glutathione = chlorohydroquinone + glutathione disulfide + chloride + H(+). The catalysed reaction is chlorohydroquinone + 2 glutathione = hydroquinone + glutathione disulfide + chloride + H(+). It participates in xenobiotic degradation; gamma-hexachlorocyclohexane degradation. Its function is as follows. Catalyzes the degradation of 2,5-dichlorohydroquinone (2,5-DCHQ) into hydroquinone (HQ) via chlorohydroquinone (CHQ). Is involved in the degradation pathway that allows S.japonicum UT26 to grow on gamma-hexachlorocyclohexane (gamma-HCH or lindane) as the sole source of carbon and energy. However, the conversion of CHQ to HQ by LinD seems not to be essential for this degradation pathway, because the conversion rate of CHQ to HQ is much lower than that of 2,5-DCHQ to CHQ. CHQ is more efficiently degraded by LinE in strain UT26. The sequence is that of 2,5-dichlorohydroquinone reductive dechlorinase from Sphingobium indicum (strain DSM 16413 / CCM 7287 / MTCC 6362 / UT26 / NBRC 101211 / UT26S) (Sphingobium japonicum).